The following is a 204-amino-acid chain: Large ribosomal subunit protein uL4 (204 aa).

The interval 49 to 75 (TKGRSDVSGGGKKPWRQKGRGGARAGS) is disordered.

The protein belongs to the universal ribosomal protein uL4 family. Part of the 50S ribosomal subunit.

Functionally, one of the primary rRNA binding proteins, this protein initially binds near the 5'-end of the 23S rRNA. It is important during the early stages of 50S assembly. It makes multiple contacts with different domains of the 23S rRNA in the assembled 50S subunit and ribosome. Its function is as follows. Forms part of the polypeptide exit tunnel. The polypeptide is Large ribosomal subunit protein uL4 (Campylobacter jejuni subsp. jejuni serotype O:23/36 (strain 81-176)).